Here is a 199-residue protein sequence, read N- to C-terminus: Imidazoleglycerol-phosphate dehydratase (199 aa).

Belongs to the imidazoleglycerol-phosphate dehydratase family.

It localises to the cytoplasm. The catalysed reaction is D-erythro-1-(imidazol-4-yl)glycerol 3-phosphate = 3-(imidazol-4-yl)-2-oxopropyl phosphate + H2O. The protein operates within amino-acid biosynthesis; L-histidine biosynthesis; L-histidine from 5-phospho-alpha-D-ribose 1-diphosphate: step 6/9. The polypeptide is Imidazoleglycerol-phosphate dehydratase (Methylibium petroleiphilum (strain ATCC BAA-1232 / LMG 22953 / PM1)).